We begin with the raw amino-acid sequence, 278 residues long: Chitosanase (278 aa).

Residues 1-41 (MRLKHPTARLALAALLVAVPRSVAAAGTVHAAPAPAGATRL) form the signal peptide. The active-site Proton donor is the Glu-63. Catalysis depends on Asp-81, which acts as the Nucleophile.

Belongs to the glycosyl hydrolase 46 family.

The protein localises to the secreted. The enzyme catalyses Endohydrolysis of beta-(1-&gt;4)-linkages between D-glucosamine residues in a partly acetylated chitosan.. In terms of biological role, aids in the defense against invading fungal pathogens by degrading their cell wall chitosan. This chain is Chitosanase (csn), found in Nocardioides sp. (strain N106).